The primary structure comprises 126 residues: Large ribosomal subunit protein uL22 (126 aa).

Belongs to the universal ribosomal protein uL22 family. As to quaternary structure, part of the 50S ribosomal subunit.

This protein binds specifically to 23S rRNA; its binding is stimulated by other ribosomal proteins, e.g. L4, L17, and L20. It is important during the early stages of 50S assembly. It makes multiple contacts with different domains of the 23S rRNA in the assembled 50S subunit and ribosome. Functionally, the globular domain of the protein is located near the polypeptide exit tunnel on the outside of the subunit, while an extended beta-hairpin is found that lines the wall of the exit tunnel in the center of the 70S ribosome. This Jannaschia sp. (strain CCS1) protein is Large ribosomal subunit protein uL22.